We begin with the raw amino-acid sequence, 778 residues long: Dynein axonemal intermediate chain 4 (778 aa).

WD repeat units lie at residues 477–517 (HCES…QTPI), 526–573 (LHTS…ECVD), 586–629 (RHIS…QYLE), 633–673 (AHKR…PVMG), 676–715 (SGQR…LDPT), and 721–760 (SPGV…AGGG).

In terms of assembly, part of the multisubunit axonemal dynein complex formed at least of two heavy chains and a number of intermediate and light chains.

The protein localises to the cytoplasm. The protein resides in the cytoskeleton. It localises to the flagellum axoneme. Its subcellular location is the cilium axoneme. It is found in the dynein axonemal particle. Plays a critical role in the assembly of axonemal dynein complex. Plays a key role in ciliary motility. The polypeptide is Dynein axonemal intermediate chain 4 (Danio rerio (Zebrafish)).